A 188-amino-acid chain; its full sequence is MKVIIAATLLGILMHAFAEECELMPPGDNFDLEKYFSIPHVYVTHSRNGPKEQVCREYKTTKNSDGTTTTLVTSDYKTGGKPYHSELKCTNTPKSGVKGQFSVECEVPNGNGGKKKIHVETSVIATDYKNYALLQSCTKTESGIADDVLLLQTKKEGVDPGVTSVLKSVNWSLDDWFSRSKVNCDNMK.

Positions 1–18 (MKVIIAATLLGILMHAFA) are cleaved as a signal peptide. Cystine bridges form between cysteine 21–cysteine 137, cysteine 55–cysteine 184, and cysteine 89–cysteine 105.

Belongs to the calycin superfamily. Triabin family. Expressed in salivary glands.

It is found in the secreted. Has been described as a specific inhibitor of collagen-induced platelet aggregation. However, as it does not affect platelet shape change or adhesion, it is plausible that it exerts its antiplatelet activity by a mechanism similar to that of triplatin, moubatin and dipetalodipin as scavenging eicosanoids involved in inflammation such as thromboxane A2 (TXA2). This Meccus pallidipennis (Triatomine bug) protein is Pallidipin.